A 353-amino-acid polypeptide reads, in one-letter code: Probable peptidoglycan glycosyltransferase FtsW (353 aa).

Helical transmembrane passes span 26-46 (IFYF…PMSF), 53-73 (LILI…KSVH), 115-135 (FWGF…LLAE), 137-157 (DLGT…LSGV), 162-182 (FFII…FEPY), 242-262 (IIGE…IFFI), 288-308 (IGLW…GILP), and 314-334 (LPLI…ICIL).

The protein belongs to the SEDS family. FtsW subfamily.

Its subcellular location is the cell inner membrane. The enzyme catalyses [GlcNAc-(1-&gt;4)-Mur2Ac(oyl-L-Ala-gamma-D-Glu-L-Lys-D-Ala-D-Ala)](n)-di-trans,octa-cis-undecaprenyl diphosphate + beta-D-GlcNAc-(1-&gt;4)-Mur2Ac(oyl-L-Ala-gamma-D-Glu-L-Lys-D-Ala-D-Ala)-di-trans,octa-cis-undecaprenyl diphosphate = [GlcNAc-(1-&gt;4)-Mur2Ac(oyl-L-Ala-gamma-D-Glu-L-Lys-D-Ala-D-Ala)](n+1)-di-trans,octa-cis-undecaprenyl diphosphate + di-trans,octa-cis-undecaprenyl diphosphate + H(+). It participates in cell wall biogenesis; peptidoglycan biosynthesis. Functionally, peptidoglycan polymerase that is essential for cell division. In Buchnera aphidicola subsp. Schizaphis graminum (strain Sg), this protein is Probable peptidoglycan glycosyltransferase FtsW.